The following is a 124-amino-acid chain: Small ribosomal subunit protein uS12 (124 aa).

Positions 1–28 are disordered; sequence MPTISQLIGSERKRLTRKTKSPALKSCP. 3-methylthioaspartic acid is present on Asp89. The segment at 104–124 is disordered; the sequence is TAGVKDRRQSRSKYGAKAPKD.

The protein belongs to the universal ribosomal protein uS12 family. As to quaternary structure, part of the 30S ribosomal subunit. Contacts proteins S8 and S17. May interact with IF1 in the 30S initiation complex.

In terms of biological role, with S4 and S5 plays an important role in translational accuracy. Its function is as follows. Interacts with and stabilizes bases of the 16S rRNA that are involved in tRNA selection in the A site and with the mRNA backbone. Located at the interface of the 30S and 50S subunits, it traverses the body of the 30S subunit contacting proteins on the other side and probably holding the rRNA structure together. The combined cluster of proteins S8, S12 and S17 appears to hold together the shoulder and platform of the 30S subunit. In Prochlorococcus marinus (strain MIT 9312), this protein is Small ribosomal subunit protein uS12.